The chain runs to 136 residues: Monothiol glutaredoxin-S3 (136 aa).

The Glutaredoxin domain occupies 18 to 135 (EREVRRAVEE…PVLKQAGALW (118 aa)). Cysteine 38 contributes to the [2Fe-2S] cluster binding site. Positions 133-136 (ALWL) match the Responsive for interaction with TGA factors motif.

It belongs to the glutaredoxin family. CC-type subfamily.

It is found in the cytoplasm. It localises to the nucleus. In terms of biological role, may only reduce GSH-thiol disulfides, but not protein disulfides. The sequence is that of Monothiol glutaredoxin-S3 (GRXS3) from Oryza sativa subsp. japonica (Rice).